The sequence spans 245 residues: Biosynthetic peptidoglycan transglycosylase (245 aa).

The helical transmembrane segment at 20 to 42 (VYAGSVFAGAWLATQLFYLAQIA) threads the bilayer.

This sequence belongs to the glycosyltransferase 51 family.

It is found in the cell inner membrane. The catalysed reaction is [GlcNAc-(1-&gt;4)-Mur2Ac(oyl-L-Ala-gamma-D-Glu-L-Lys-D-Ala-D-Ala)](n)-di-trans,octa-cis-undecaprenyl diphosphate + beta-D-GlcNAc-(1-&gt;4)-Mur2Ac(oyl-L-Ala-gamma-D-Glu-L-Lys-D-Ala-D-Ala)-di-trans,octa-cis-undecaprenyl diphosphate = [GlcNAc-(1-&gt;4)-Mur2Ac(oyl-L-Ala-gamma-D-Glu-L-Lys-D-Ala-D-Ala)](n+1)-di-trans,octa-cis-undecaprenyl diphosphate + di-trans,octa-cis-undecaprenyl diphosphate + H(+). The protein operates within cell wall biogenesis; peptidoglycan biosynthesis. Peptidoglycan polymerase that catalyzes glycan chain elongation from lipid-linked precursors. This Burkholderia orbicola (strain MC0-3) protein is Biosynthetic peptidoglycan transglycosylase.